A 259-amino-acid polypeptide reads, in one-letter code: Deoxyribose-phosphate aldolase (259 aa).

The active-site Proton donor/acceptor is Asp102. Catalysis depends on Lys167, which acts as the Schiff-base intermediate with acetaldehyde. Lys201 serves as the catalytic Proton donor/acceptor.

The protein belongs to the DeoC/FbaB aldolase family. DeoC type 2 subfamily.

The protein resides in the cytoplasm. The catalysed reaction is 2-deoxy-D-ribose 5-phosphate = D-glyceraldehyde 3-phosphate + acetaldehyde. It functions in the pathway carbohydrate degradation; 2-deoxy-D-ribose 1-phosphate degradation; D-glyceraldehyde 3-phosphate and acetaldehyde from 2-deoxy-alpha-D-ribose 1-phosphate: step 2/2. Functionally, catalyzes a reversible aldol reaction between acetaldehyde and D-glyceraldehyde 3-phosphate to generate 2-deoxy-D-ribose 5-phosphate. The protein is Deoxyribose-phosphate aldolase of Salmonella typhi.